We begin with the raw amino-acid sequence, 154 residues long: MAAKGNNSSRRSSRALAFQVLYGLNFSPAKDLAQLQEAYCASPDVSDRGGEAHPVGFAWELIEGTWTNQKALDEIITRFAQNWRVERIGKIELTILRLAVYEMLYRADVPPKVAINEGIELSKQFGDDKSRNFINGILDAAAKALEAGTITCKY.

This sequence belongs to the NusB family.

Functionally, involved in transcription antitermination. Required for transcription of ribosomal RNA (rRNA) genes. Binds specifically to the boxA antiterminator sequence of the ribosomal RNA (rrn) operons. The polypeptide is Transcription antitermination protein NusB (Oleidesulfovibrio alaskensis (strain ATCC BAA-1058 / DSM 17464 / G20) (Desulfovibrio alaskensis)).